A 260-amino-acid chain; its full sequence is Proteasome subunit alpha (260 aa).

Positions 241 to 260 (VEEEEVKEKEEDYSELDSHY) are disordered.

It belongs to the peptidase T1A family. The 20S proteasome core is composed of 14 alpha and 14 beta subunits that assemble into four stacked heptameric rings, resulting in a barrel-shaped structure. The two inner rings, each composed of seven catalytic beta subunits, are sandwiched by two outer rings, each composed of seven alpha subunits. The catalytic chamber with the active sites is on the inside of the barrel. Has a gated structure, the ends of the cylinder being occluded by the N-termini of the alpha-subunits. Is capped at one or both ends by the proteasome regulatory ATPase, PAN.

The protein resides in the cytoplasm. With respect to regulation, the formation of the proteasomal ATPase PAN-20S proteasome complex, via the docking of the C-termini of PAN into the intersubunit pockets in the alpha-rings, triggers opening of the gate for substrate entry. Interconversion between the open-gate and close-gate conformations leads to a dynamic regulation of the 20S proteasome proteolysis activity. Component of the proteasome core, a large protease complex with broad specificity involved in protein degradation. This chain is Proteasome subunit alpha, found in Pyrococcus horikoshii (strain ATCC 700860 / DSM 12428 / JCM 9974 / NBRC 100139 / OT-3).